The sequence spans 213 residues: Urease accessory protein UreG (213 aa).

Residue 12–19 coordinates GTP; it reads GPVGSGKT.

The protein belongs to the SIMIBI class G3E GTPase family. UreG subfamily. In terms of assembly, homodimer. UreD, UreF and UreG form a complex that acts as a GTP-hydrolysis-dependent molecular chaperone, activating the urease apoprotein by helping to assemble the nickel containing metallocenter of UreC. The UreE protein probably delivers the nickel.

Its subcellular location is the cytoplasm. In terms of biological role, facilitates the functional incorporation of the urease nickel metallocenter. This process requires GTP hydrolysis, probably effectuated by UreG. The sequence is that of Urease accessory protein UreG from Marinomonas sp. (strain MWYL1).